A 144-amino-acid polypeptide reads, in one-letter code: Putative sugar phosphate isomerase RT0290 (144 aa).

H12 contacts substrate. H101 serves as the catalytic Proton donor. R135 is a binding site for substrate.

Belongs to the LacAB/RpiB family.

The protein is Putative sugar phosphate isomerase RT0290 of Rickettsia typhi (strain ATCC VR-144 / Wilmington).